The chain runs to 1640 residues: Clathrin heavy chain 2 (1640 aa).

Ala2 carries the N-acetylalanine modification. Residues 2-479 (AQILPVRFQE…TDPMLALSVY (478 aa)) form a globular terminal domain region. WD40-like repeat stretches follow at residues 24-67 (NIGF…RPIS), 68-107 (AESAIMNPASKVIALKAGKTLQIFNIEMKSKMKAHTMAEE), 108-149 (VIFW…TSLV), 150-195 (GCQV…QPIE), 196-257 (GHAA…PEAQ), 258-301 (NDFP…ISAD), and 302-330 (TIFVTAPHKPTSGIIGVNKKGQVLSVCVE). Ser67 is subject to Phosphoserine. Tyr184 is modified (phosphotyrosine). Position 394 is a phosphothreonine (Thr394). The interval 449-465 (EKWLKEDKLECSEELGD) is binding site for the uncoating ATPase, involved in lattice disassembly. The interval 480–523 (LRANVPSKVIQCFAETGQFQKIVLYAKKVGYTPDWIFLLRGVMK) is flexible linker. Positions 524–634 (ISPEQGLQFS…QALEHYTDLY (111 aa)) are distal segment. The tract at residues 524 to 1640 (ISPEQGLQFS…PLVFDFDGHE (1117 aa)) is heavy chain arm. CHCR repeat units follow at residues 537–683 (VQDE…QLCV), 686–828 (ASKY…SEEV), 833–972 (IMAV…QLID), 979–1124 (LSET…VKEA), 1128–1269 (YIRG…FRFA), 1274–1420 (LHIV…LLIN), and 1423–1566 (LLVL…RECF). Phosphotyrosine is present on Tyr634. Residues 639–1640 (AVVHTHLLNP…PLVFDFDGHE (1002 aa)) are proximal segment. Residue Lys737 is modified to N6-succinyllysine. Lys856 is modified (N6-acetyllysine). A Phosphotyrosine modification is found at Tyr899. At Ser1167 the chain carries Phosphoserine. Tyr1206 carries the phosphotyrosine modification. The interval 1213-1522 (AAKLLYSNVS…YLYKGNNWWA (310 aa)) is involved in binding clathrin light chain. Ser1229 bears the Phosphoserine mark. Lys1441 is subject to N6-acetyllysine; alternate. N6-succinyllysine; alternate is present on Lys1441. Tyr1477 and Tyr1487 each carry phosphotyrosine. A Phosphoserine modification is found at Ser1494. Position 1501 is an N6-acetyllysine (Lys1501). The segment at 1551–1640 (QKLLQWFLEE…PLVFDFDGHE (90 aa)) is trimerization.

This sequence belongs to the clathrin heavy chain family. In terms of assembly, clathrin triskelions, composed of 3 heavy chains and 3 light chains, are the basic subunits of the clathrin coat. In the presence of light chains, hub assembly is influenced by both the pH and the concentration of calcium. May interact with OCRL. Interacts with AFTPH/aftiphilin. In terms of tissue distribution, maximal levels in skeletal muscle. High levels in heart and testis. Low expression detected in all other tissues.

It is found in the cytoplasmic vesicle membrane. It localises to the membrane. The protein resides in the coated pit. Clathrin is the major protein of the polyhedral coat of coated pits and vesicles. Two different adapter protein complexes link the clathrin lattice either to the plasma membrane or to the trans-Golgi network. The sequence is that of Clathrin heavy chain 2 (CLTCL1) from Homo sapiens (Human).